Here is a 776-residue protein sequence, read N- to C-terminus: Lon protease (776 aa).

The region spanning 12 to 209 (LPIIALRGLW…LVYKFVIKEI (198 aa)) is the Lon N-terminal domain. Position 360-367 (360-367 (GPPGVGKT)) interacts with ATP. A Lon proteolytic domain is found at 596 to 776 (EDTVGVVNGL…VKEILDEVLI (181 aa)). Residues Ser-683 and Lys-726 contribute to the active site.

The protein belongs to the peptidase S16 family. As to quaternary structure, homohexamer. Organized in a ring with a central cavity.

Its subcellular location is the cytoplasm. It carries out the reaction Hydrolysis of proteins in presence of ATP.. In terms of biological role, ATP-dependent serine protease that mediates the selective degradation of mutant and abnormal proteins as well as certain short-lived regulatory proteins. Required for cellular homeostasis and for survival from DNA damage and developmental changes induced by stress. Degrades polypeptides processively to yield small peptide fragments that are 5 to 10 amino acids long. Binds to DNA in a double-stranded, site-specific manner. The chain is Lon protease from Finegoldia magna (strain ATCC 29328 / DSM 20472 / WAL 2508) (Peptostreptococcus magnus).